A 229-amino-acid polypeptide reads, in one-letter code: Uracil-DNA glycosylase (229 aa).

Asp65 serves as the catalytic Proton acceptor.

This sequence belongs to the uracil-DNA glycosylase (UDG) superfamily. UNG family.

The protein localises to the cytoplasm. The catalysed reaction is Hydrolyzes single-stranded DNA or mismatched double-stranded DNA and polynucleotides, releasing free uracil.. Functionally, excises uracil residues from the DNA which can arise as a result of misincorporation of dUMP residues by DNA polymerase or due to deamination of cytosine. This is Uracil-DNA glycosylase from Latilactobacillus sakei subsp. sakei (strain 23K) (Lactobacillus sakei subsp. sakei).